A 96-amino-acid chain; its full sequence is Class I hydrophobin 2 (96 aa).

A signal peptide spans 1–15; sequence MFKALIVALAAVAAA. Disulfide bonds link Cys-28/Cys-77, Cys-34/Cys-71, Cys-35/Cys-55, and Cys-78/Cys-91.

This sequence belongs to the fungal hydrophobin family.

It is found in the secreted. Its subcellular location is the cell wall. Its function is as follows. Aerial growth, conidiation, and dispersal of filamentous fungi in the environment rely upon a capability of their secreting small amphipathic proteins called hydrophobins (HPBs) with low sequence identity. Class I can self-assemble into an outermost layer of rodlet bundles on aerial cell surfaces, conferring cellular hydrophobicity that supports fungal growth, development and dispersal; whereas Class II form highly ordered films at water-air interfaces through intermolecular interactions but contribute nothing to the rodlet structure. Hyd2 plays a neglectable role in hyphal growth and asexual development and does not seem involved in cellular hydrophobicity, conidial adhesion, stress tolerance nor insect pathogenicity. This chain is Class I hydrophobin 2, found in Metarhizium robertsii (strain ARSEF 23 / ATCC MYA-3075) (Metarhizium anisopliae (strain ARSEF 23)).